The sequence spans 320 residues: Transaldolase (320 aa).

Catalysis depends on lysine 135, which acts as the Schiff-base intermediate with substrate.

This sequence belongs to the transaldolase family. Type 1 subfamily. In terms of assembly, homodimer.

The protein resides in the cytoplasm. The enzyme catalyses D-sedoheptulose 7-phosphate + D-glyceraldehyde 3-phosphate = D-erythrose 4-phosphate + beta-D-fructose 6-phosphate. Its pathway is carbohydrate degradation; pentose phosphate pathway; D-glyceraldehyde 3-phosphate and beta-D-fructose 6-phosphate from D-ribose 5-phosphate and D-xylulose 5-phosphate (non-oxidative stage): step 2/3. Its function is as follows. Transaldolase is important for the balance of metabolites in the pentose-phosphate pathway. This Colwellia psychrerythraea (strain 34H / ATCC BAA-681) (Vibrio psychroerythus) protein is Transaldolase.